A 345-amino-acid chain; its full sequence is GDSL esterase/lipase At1g23500 (345 aa).

Positions 1 to 24 (MNFSLLSTMLMALSSVCLFFVGYA) are cleaved as a signal peptide. Ser42 (nucleophile) is an active-site residue. A glycan (N-linked (GlcNAc...) asparagine) is linked at Asn103. Active-site residues include Asp320 and His323.

It belongs to the 'GDSL' lipolytic enzyme family.

Its subcellular location is the secreted. The protein is GDSL esterase/lipase At1g23500 of Arabidopsis thaliana (Mouse-ear cress).